Reading from the N-terminus, the 449-residue chain is UDP-N-acetylmuramoylalanine--D-glutamate ligase (449 aa).

118–124 (GTNGKTT) contacts ATP.

It belongs to the MurCDEF family.

The protein localises to the cytoplasm. It carries out the reaction UDP-N-acetyl-alpha-D-muramoyl-L-alanine + D-glutamate + ATP = UDP-N-acetyl-alpha-D-muramoyl-L-alanyl-D-glutamate + ADP + phosphate + H(+). It participates in cell wall biogenesis; peptidoglycan biosynthesis. Functionally, cell wall formation. Catalyzes the addition of glutamate to the nucleotide precursor UDP-N-acetylmuramoyl-L-alanine (UMA). This Staphylococcus epidermidis (strain ATCC 12228 / FDA PCI 1200) protein is UDP-N-acetylmuramoylalanine--D-glutamate ligase.